We begin with the raw amino-acid sequence, 477 residues long: Cytochrome P450 708A2 (477 aa).

The helical transmembrane segment at 3-23 (FVWSAAVWVIAVAAVVISKWL) threads the bilayer. Heme is bound at residue C426.

This sequence belongs to the cytochrome P450 family. Requires heme as cofactor. Expressed primarily in the root epidermis.

It is found in the membrane. Its function is as follows. Hydroxylates thalianol into thalian-diol. This is Cytochrome P450 708A2 (CYP708A2) from Arabidopsis thaliana (Mouse-ear cress).